Here is a 141-residue protein sequence, read N- to C-terminus: Large ribosomal subunit protein uL16 (141 aa).

The protein belongs to the universal ribosomal protein uL16 family. Part of the 50S ribosomal subunit.

Binds 23S rRNA and is also seen to make contacts with the A and possibly P site tRNAs. In Hydrogenobaculum sp. (strain Y04AAS1), this protein is Large ribosomal subunit protein uL16.